The following is a 253-amino-acid chain: MTRVILFPAIDLKEGRCVRLVQGDMAQAIVFSDDPAAQAASFAEQGFSWLHVVDLDGAFAGAPMNAAAVDAILAAVTIPVQLGGGIREMRTVEGWLAKGVSRVIIGTAAVRDPAFVREAARLFPGRIAVGIDAKDGRVAVEGWAKTSTVTAEELGRRFEDAGVAALIYTDIARDGVLKGLNIPMTLALAQAVSIPVIASGGLASIEDVHRILEPDCALLAGAITGRALYDGRIDPREALAAIRRAEEARRSGS.

Catalysis depends on aspartate 11, which acts as the Proton acceptor. The active-site Proton donor is aspartate 132.

The protein belongs to the HisA/HisF family.

It localises to the cytoplasm. The catalysed reaction is 1-(5-phospho-beta-D-ribosyl)-5-[(5-phospho-beta-D-ribosylamino)methylideneamino]imidazole-4-carboxamide = 5-[(5-phospho-1-deoxy-D-ribulos-1-ylimino)methylamino]-1-(5-phospho-beta-D-ribosyl)imidazole-4-carboxamide. It participates in amino-acid biosynthesis; L-histidine biosynthesis; L-histidine from 5-phospho-alpha-D-ribose 1-diphosphate: step 4/9. In Methylobacterium nodulans (strain LMG 21967 / CNCM I-2342 / ORS 2060), this protein is 1-(5-phosphoribosyl)-5-[(5-phosphoribosylamino)methylideneamino] imidazole-4-carboxamide isomerase.